The primary structure comprises 692 residues: Elongation factor G (692 aa).

A tr-type G domain is found at 8–282 (ENTRNIGIMA…GVVDYLPSPV (275 aa)). Residues 17-24 (AHIDAGKT), 81-85 (DTPGH), and 135-138 (NKMD) contribute to the GTP site.

The protein belongs to the TRAFAC class translation factor GTPase superfamily. Classic translation factor GTPase family. EF-G/EF-2 subfamily.

It is found in the cytoplasm. In terms of biological role, catalyzes the GTP-dependent ribosomal translocation step during translation elongation. During this step, the ribosome changes from the pre-translocational (PRE) to the post-translocational (POST) state as the newly formed A-site-bound peptidyl-tRNA and P-site-bound deacylated tRNA move to the P and E sites, respectively. Catalyzes the coordinated movement of the two tRNA molecules, the mRNA and conformational changes in the ribosome. The protein is Elongation factor G of Anoxybacillus flavithermus (strain DSM 21510 / WK1).